The sequence spans 58 residues: Rho-conotoxin TIA (58 aa).

A signal peptide spans M1–S16. A propeptide spanning residues F17–R38 is cleaved from the precursor. Residues N40–R42 are interaction with ADRA1B. 2 cysteine pairs are disulfide-bonded: C43–C49 and C44–C57. The segment at L45–P47 is lacks the Ser-Xaa-Pro motif that is crucial for potent interaction with nAChR. At C57 the chain carries Cysteine amide.

The protein belongs to the conotoxin A superfamily. As to expression, expressed by the venom duct.

Its subcellular location is the secreted. In terms of biological role, allosteric inhibitor of alpha-1B adrenergic receptors (ADRA1B). Binds to an allosteric modulatory site on transmembrane helix 6 and 7 at the base of extracellular loop 3 of ADRA1B. Also weakly inhibits alpha-1A (ADRA1A) and alpha-1D (ADRA1D) adrenergic receptors in a competitive manner. Potently inhibits contractions of vas deferens, spleen and aorta in response to noradrenaline. May also inhibits nicotinic acetylcholine receptors with a possible distinct nAChR binding mode from other alpha-conotoxins, due to a different three residue motif (lacks the Ser-Xaa-Pro motif). The protein is Rho-conotoxin TIA of Conus tulipa (Fish-hunting cone snail).